Here is a 419-residue protein sequence, read N- to C-terminus: Zinc finger protein Pegasus (419 aa).

Residue Lys-5 forms a Glycyl lysine isopeptide (Lys-Gly) (interchain with G-Cter in SUMO2) linkage. Residues 36 to 55 (DKEAETLQGAGTDGDQNGLD) form a disordered region. 3 C2H2-type zinc fingers span residues 82–104 (LKCRYCNYASKGTARLIEHIRIH), 110–132 (HRCHLCPFASAYERHLEAHMRSH), and 138–161 (YKCELCSFRCSDRSNLSHHRRRKH). Lys-185 participates in a covalent cross-link: Glycyl lysine isopeptide (Lys-Gly) (interchain with G-Cter in SUMO2). Residues 262–273 (LSSLPPENQNPA) show a composition bias toward polar residues. 2 disordered regions span residues 262–284 (LSSLPPENQNPASPDVDACPDEK) and 297–356 (VSAV…PTLP). Residues 297–311 (VSAVSASIPQSSSPT) show a composition bias toward low complexity. The span at 332-349 (SEPSAHTSTPSIGNSQPS) shows a compositional bias: polar residues. 2 C2H2-type zinc fingers span residues 364 to 386 (HHCQHCDVYFADNVLYTVHMGCH) and 392 to 416 (FQCNVCGCKCKDKYDFACHFARGQH).

The protein belongs to the Ikaros C2H2-type zinc-finger protein family. Self-associates. Interacts with other family members; IKZF1, IKZF2, IKZF3 and IKZF4.

It is found in the nucleus. Its function is as follows. Transcriptional repressor that binds the core 5'GNNTGTNG-3' DNA consensus sequence. Involved in megakaryocyte differentiation. The polypeptide is Zinc finger protein Pegasus (Ikzf5) (Mus musculus (Mouse)).